The primary structure comprises 297 residues: Protoheme IX farnesyltransferase (297 aa).

9 helical membrane-spanning segments follow: residues 12–32 (PGII…AAKG), 36–56 (YALF…GCVF), 85–105 (VSLV…YLAA), 108–128 (LAMW…SLYM), 133–153 (VYGT…GYCA), 163–183 (LILL…IAIF), 209–229 (ITLY…SGYA), 230–250 (GYKY…MALQ), and 266–286 (FIFS…DFMV).

The protein belongs to the UbiA prenyltransferase family. Protoheme IX farnesyltransferase subfamily.

The protein resides in the cell inner membrane. The catalysed reaction is heme b + (2E,6E)-farnesyl diphosphate + H2O = Fe(II)-heme o + diphosphate. The protein operates within porphyrin-containing compound metabolism; heme O biosynthesis; heme O from protoheme: step 1/1. Converts heme B (protoheme IX) to heme O by substitution of the vinyl group on carbon 2 of heme B porphyrin ring with a hydroxyethyl farnesyl side group. This chain is Protoheme IX farnesyltransferase, found in Sodalis glossinidius (strain morsitans).